A 673-amino-acid polypeptide reads, in one-letter code: DNA ligase (673 aa).

NAD(+) contacts are provided by residues 36–40, 85–86, and E118; these read DSEYD and SL. K120 serves as the catalytic N6-AMP-lysine intermediate. R141, E178, K295, and K319 together coordinate NAD(+). Zn(2+)-binding residues include C413, C416, C431, and C437. One can recognise a BRCT domain in the interval 596-673; it reads VRDNPLKGKT…SENEFLALLA (78 aa).

Belongs to the NAD-dependent DNA ligase family. LigA subfamily. It depends on Mg(2+) as a cofactor. The cofactor is Mn(2+).

The enzyme catalyses NAD(+) + (deoxyribonucleotide)n-3'-hydroxyl + 5'-phospho-(deoxyribonucleotide)m = (deoxyribonucleotide)n+m + AMP + beta-nicotinamide D-nucleotide.. In terms of biological role, DNA ligase that catalyzes the formation of phosphodiester linkages between 5'-phosphoryl and 3'-hydroxyl groups in double-stranded DNA using NAD as a coenzyme and as the energy source for the reaction. It is essential for DNA replication and repair of damaged DNA. The sequence is that of DNA ligase from Histophilus somni (strain 129Pt) (Haemophilus somnus).